Reading from the N-terminus, the 330-residue chain is Phosphate acyltransferase (330 aa).

This sequence belongs to the PlsX family. As to quaternary structure, homodimer. Probably interacts with PlsY.

The protein resides in the cytoplasm. It carries out the reaction a fatty acyl-[ACP] + phosphate = an acyl phosphate + holo-[ACP]. The protein operates within lipid metabolism; phospholipid metabolism. Functionally, catalyzes the reversible formation of acyl-phosphate (acyl-PO(4)) from acyl-[acyl-carrier-protein] (acyl-ACP). This enzyme utilizes acyl-ACP as fatty acyl donor, but not acyl-CoA. The chain is Phosphate acyltransferase from Bacillus cereus (strain ATCC 14579 / DSM 31 / CCUG 7414 / JCM 2152 / NBRC 15305 / NCIMB 9373 / NCTC 2599 / NRRL B-3711).